Here is a 156-residue protein sequence, read N- to C-terminus: Deoxyuridine 5'-triphosphate nucleotidohydrolase (156 aa).

Substrate-binding positions include 76–78, Asn-89, 93–95, and Lys-103; these read RSG and TVD.

This sequence belongs to the dUTPase family. It depends on Mg(2+) as a cofactor.

The catalysed reaction is dUTP + H2O = dUMP + diphosphate + H(+). It functions in the pathway pyrimidine metabolism; dUMP biosynthesis; dUMP from dCTP (dUTP route): step 2/2. In terms of biological role, this enzyme is involved in nucleotide metabolism: it produces dUMP, the immediate precursor of thymidine nucleotides and it decreases the intracellular concentration of dUTP so that uracil cannot be incorporated into DNA. The polypeptide is Deoxyuridine 5'-triphosphate nucleotidohydrolase (Rhizobium etli (strain ATCC 51251 / DSM 11541 / JCM 21823 / NBRC 15573 / CFN 42)).